The following is a 964-amino-acid chain: MALLCGLGQVTLRLWVPLPFQSENRIGFLAAGAFLRSGGMEALTTQLGPGREGSSSPNSKQELQPYSGSSALKPNQVGETSLYGVPIVSLVIDGQERLCLAQISNTLLKNYSYNEIHNRRVALGITCVQCTPVQLEILRRAGAMPISSRRCGMITKREAERLCKSFLGEHKPPKLPENFAFDVVHECAWGSRGSFIPARYNSSRAKCIKCGYCSMYFSPNKFIFHSHRTPDAKYTQPDAANFNSWRRHLKLSDKSATDELSHAWEDVKAMFNGGTRKRTFSLQGGGGGGANSGSGGAGKGGAGGGGGPGCGSEMAPGPPPHKSLRCGEDEAAGPPGPPPPHPQRALGLAAAASGPAGPGGPGGSAGVRSYPVIPVPSKGFGLLQKLPPPLFPHPYGFPTAFGLCPKKDDPVLVAGEPKGGPGTGSSGGAGTAAGAGGPGAGHLPPGAGPGPGGGTMFWGHQPSGAAKDAAAVAAAAAAATVYPTFPMFWPAAGSLPVPPYPAAQSQAKAVAAAVAAAAAAAAAAAGGGGPESLDGAEPAKEGSLGTEERCPSALSRGPLDEDGADEALPPSLGPLPPPPPPPARKSSYVSAFRPVVKDAESIAKLYGSAREAYGSGPARGPVPGTGTGGGYVSPDFLSEGSSSYHSASPDVDTADEPEVDVESNRFPDEEGAQDDTEPRAPSTGGGPDGDQPAGPPSVTSSGADGPTDSADGDSPRPRRRLGPPPAIRSAFGDLVADDVVRRTERSPPSGGYELREPCGPLGGPGAAKVYAPERDEHVKSTAVAAALGPAASYLCTPETHEPDKEDNHSTTADDLETRKSFSDQRSVSQPSPANTDRGEDGLTLDVTGTQLVEKDIENLAREELQKLLLEQMELRKKLEREFQSLKDNFQDQMKRELAYREEMVQQLQIVRDTLCNELDQERKARYAIQQKLKEAHDALHHFSCKMLTPRHCTGNCSFKPPLLP.

Disordered regions lie at residues 45–72 (TQLGPGREGSSSPNSKQELQPYSGSSAL), 278–365 (RTFS…GGSA), 414–461 (AGEP…WGHQ), 525–587 (AGGG…RKSS), 610–768 (REAY…GAAK), and 794–842 (LCTP…EDGL). Residues 283–310 (QGGGGGGANSGSGGAGKGGAGGGGGPGC) are compositionally biased toward gly residues. A compositionally biased stretch (low complexity) spans 345–355 (ALGLAAAASGP). Composition is skewed to gly residues over residues 356–365 (AGPGGPGGSA) and 417–440 (PKGGPGTGSSGGAGTAAGAGGPGA). A compositionally biased stretch (pro residues) spans 571–583 (SLGPLPPPPPPPA). The span at 652-661 (DTADEPEVDV) shows a compositional bias: acidic residues. The span at 798-808 (ETHEPDKEDNH) shows a compositional bias: basic and acidic residues. A compositionally biased stretch (polar residues) spans 823 to 834 (DQRSVSQPSPAN). Positions 853–921 (EKDIENLARE…DTLCNELDQE (69 aa)) form a coiled coil.

The protein belongs to the SKI family. Interacts with SMAD1, SMAD2 and SMAD3. Interacts with LBX1. Expressed in brain with higher levels in embryo than adult. Expressed by migratory precursors of Purkinje cells in the postnatal brain. Also expressed in adult testis.

It localises to the nucleus. Its function is as follows. Inhibits BMP signaling. Acts as a transcriptional corepressor of LBX1. This chain is SKI family transcriptional corepressor 1 (Skor1), found in Mus musculus (Mouse).